Consider the following 569-residue polypeptide: Hexose transporter HXT8 (569 aa).

Residues 1 to 38 (MTDRKTNLPEEPIFEEAEDDGCPSIENSSHLSVPTVEE) are disordered. The Cytoplasmic segment spans residues 1-61 (MTDRKTNLPE…EVVVPEKPAS (61 aa)). Positions 12–21 (PIFEEAEDDG) are enriched in acidic residues. The chain crosses the membrane as a helical span at residues 62–82 (AYATVSIMCLCMAFGGFMSGW). Residues 83–118 (DTGTISGFVNQTDFLRRFGNYSHSKNTYYLSNVRTG) are Extracellular-facing. N-linked (GlcNAc...) asparagine glycosylation is found at asparagine 92 and asparagine 102. A helical membrane pass occupies residues 119-139 (LIVSIFNVGSAIGCLFLSKLG). Residues 140-145 (DIYGRC) lie on the Cytoplasmic side of the membrane. The chain crosses the membrane as a helical span at residues 146 to 166 (MGLIIVIVVYMVGIVIQIASI). Over 167–176 (DKWYQYFIGR) the chain is Extracellular. A helical transmembrane segment spans residues 177 to 197 (IIAGIGAGSISVLAPMLISET). The Cytoplasmic portion of the chain corresponds to 198-203 (APKHIR). A helical transmembrane segment spans residues 204 to 224 (GTLLACWQLMVTFAIFLGYCT). Over 225-238 (NYGTKTYSNSVQWR) the chain is Extracellular. A helical transmembrane segment spans residues 239–259 (VPLGLCFAWAIIMIGGMTFVP). Residues 260–342 (ESPRFLVQVG…INSLQQLTGD (83 aa)) are Cytoplasmic-facing. The helical transmembrane segment at 343–359 (NYFFYYGTTIFKSVGMN) threads the bilayer. Residues 360 to 365 (DSFETS) are Extracellular-facing. The helical transmembrane segment at 366 to 383 (IVLGIVNFASCFFSLYSV) threads the bilayer. Topologically, residues 384 to 390 (DKLGRRR) are cytoplasmic. A helical transmembrane segment spans residues 391–411 (CLLLGAATMTACMVIYASVGV). At 412-433 (TRLYPNGKSEPSSKGAGNCTIV) the chain is on the extracellular side. Asparagine 429 carries N-linked (GlcNAc...) asparagine glycosylation. The helical transmembrane segment at 434 to 454 (FTCFYIFCFSCTWGPVCYVII) threads the bilayer. The Cytoplasmic portion of the chain corresponds to 455-471 (SETFPLRVRSKCMSVAT). A helical transmembrane segment spans residues 472 to 492 (AANLLWGFLIGFFTPFITSAI). Position 493 (asparagine 493) is a topological domain, extracellular. A helical membrane pass occupies residues 494 to 514 (FYYGYVFMGCLAFSYFYVFFF). Over 515–569 (VPETKGLTLEEVDEMWMDGVLPWKSESWVPASRRDGDYDNEKLQHDEKPFYKRMF) the chain is Cytoplasmic.

The protein belongs to the major facilitator superfamily. Sugar transporter (TC 2.A.1.1) family.

It localises to the membrane. In terms of biological role, probable glucose transporter. In Saccharomyces cerevisiae (strain ATCC 204508 / S288c) (Baker's yeast), this protein is Hexose transporter HXT8 (HXT8).